An 85-amino-acid chain; its full sequence is Coiled-coil-helix-coiled-coil-helix domain-containing protein 7 (85 aa).

The CHCH domain occupies 13 to 55 (INPCLSESDASTRCLDENNYDKERCSTYFLKYKNCRKFWHSIM). Short sequence motifs (cx9C motif) lie at residues 16–26 (CLSESDASTRC) and 37–47 (CSTYFLKYKNC). Intrachain disulfides connect Cys16/Cys47 and Cys26/Cys37.

This sequence belongs to the CHCHD7 family. Monomer.

The protein resides in the mitochondrion intermembrane space. The protein is Coiled-coil-helix-coiled-coil-helix domain-containing protein 7 (CHCHD7) of Macaca fascicularis (Crab-eating macaque).